The following is a 370-amino-acid chain: tRNA-specific 2-thiouridylase MnmA (370 aa).

ATP-binding positions include 19–26 (AMSGGVDS) and Leu45. Cys113 (nucleophile) is an active-site residue. Cys113 and Cys209 are disulfide-bonded. ATP is bound at residue Gly137. An interaction with tRNA region spans residues 159 to 161 (KDQ). Residue Cys209 is the Cysteine persulfide intermediate of the active site.

It belongs to the MnmA/TRMU family.

Its subcellular location is the cytoplasm. It catalyses the reaction S-sulfanyl-L-cysteinyl-[protein] + uridine(34) in tRNA + AH2 + ATP = 2-thiouridine(34) in tRNA + L-cysteinyl-[protein] + A + AMP + diphosphate + H(+). Functionally, catalyzes the 2-thiolation of uridine at the wobble position (U34) of tRNA, leading to the formation of s(2)U34. The sequence is that of tRNA-specific 2-thiouridylase MnmA from Rickettsia conorii (strain ATCC VR-613 / Malish 7).